Here is a 447-residue protein sequence, read N- to C-terminus: GTPase Der (447 aa).

EngA-type G domains follow at residues 4-165 and 180-357; these read KIIA…PEEE and LQIV…KIWN. GTP is bound by residues 10–17, 57–61, 119–122, 186–193, 233–237, and 298–301; these read GRPNVGKS, DTPGL, NKCE, GRPNAGKS, DTAGL, and NKWD. Positions 358 to 443 constitute a KH-like domain; the sequence is KKIATSKLNE…PIRFTYVKTK (86 aa).

Belongs to the TRAFAC class TrmE-Era-EngA-EngB-Septin-like GTPase superfamily. EngA (Der) GTPase family. Associates with the 50S ribosomal subunit.

In terms of biological role, GTPase that plays an essential role in the late steps of ribosome biogenesis. The chain is GTPase Der from Rickettsia akari (strain Hartford).